Here is a 567-residue protein sequence, read N- to C-terminus: Thiol:disulfide interchange protein DsbD (567 aa).

An N-terminal signal peptide occupies residues 1–19 (MAQRIFTLILLLCSTSAFA). Disulfide bonds link cysteine 122–cysteine 128 and cysteine 185–cysteine 307. 8 consecutive transmembrane segments (helical) span residues 166 to 186 (LPFSALWALLIGIGIAFTPCV), 211 to 231 (LLAFIYVQGMALTYTALGLVV), 246 to 266 (YVLIGLAIVFTLLALSMFGLF), 299 to 319 (IAGLICSPCTTAPLSAILLYI), 326 to 346 (WLGGGTLYLYALGMGLPLMLV), 360 to 380 (WMAHVKTAFGFVILALPVFLL), 387 to 407 (AWGLRLWSLLGVAFFGWAFIT), and 418 to 438 (IVQIILLAAALISVRPLQDWA). Residues 435-567 (QDWAFGSPSA…FSAHLHDRQP (133 aa)) enclose the Thioredoxin domain. The cysteines at positions 482 and 485 are disulfide-linked.

It belongs to the thioredoxin family. DsbD subfamily.

The protein localises to the cell inner membrane. It carries out the reaction [protein]-dithiol + NAD(+) = [protein]-disulfide + NADH + H(+). It catalyses the reaction [protein]-dithiol + NADP(+) = [protein]-disulfide + NADPH + H(+). Functionally, required to facilitate the formation of correct disulfide bonds in some periplasmic proteins and for the assembly of the periplasmic c-type cytochromes. Acts by transferring electrons from cytoplasmic thioredoxin to the periplasm. This transfer involves a cascade of disulfide bond formation and reduction steps. The sequence is that of Thiol:disulfide interchange protein DsbD from Salmonella paratyphi A (strain ATCC 9150 / SARB42).